Reading from the N-terminus, the 1109-residue chain is Pesticidal crystal protein Cry28Aa (1109 aa).

The protein belongs to the delta endotoxin family.

Its function is as follows. Promotes colloidosmotic lysis by binding to the midgut epithelial cells of insects. The chain is Pesticidal crystal protein Cry28Aa (cry28Aa) from Bacillus thuringiensis subsp. finitimus.